The following is a 183-amino-acid chain: Capsid protein (183 aa).

The segment at 143-183 (LPETTVIRRRGRSPRRRTPSPRRRRSQSPRRRRSQSREPQC) is disordered. Residues 149-176 (IRRRGRSPRRRTPSPRRRRSQSPRRRRS) show a composition bias toward basic residues. Residues Ser-155, Ser-162, and Ser-170 each carry the phosphoserine; by host modification. The 1; half-length repeat unit spans residues 155–161 (SPRRRTP). Residues 155–177 (SPRRRTPSPRRRRSQSPRRRRSQ) form a 3 X 8 AA repeats of S-P-R-R-R-[PR]-S-Q region. A Bipartite nuclear localization signal motif is present at residues 158 to 175 (RRTPSPRRRRSQSPRRRR). A run of 2 repeats spans residues 162-169 (SPRRRRSQ) and 170-177 (SPRRRRSQ). Positions 177 to 183 (QSREPQC) are RNA binding.

The protein belongs to the orthohepadnavirus core antigen family. Homodimerizes, then multimerizes. Interacts with cytosol exposed regions of viral L glycoprotein present in the reticulum-to-Golgi compartment. Interacts with human FLNB. Phosphorylated form interacts with host importin alpha; this interaction depends on the exposure of the NLS, which itself depends upon genome maturation and/or phosphorylation of the capsid protein. Interacts with host NUP153. In terms of processing, phosphorylated by host SRPK1, SRPK2, and maybe protein kinase C or GAPDH. Phosphorylation is critical for pregenomic RNA packaging. Protein kinase C phosphorylation is stimulated by HBx protein and may play a role in transport of the viral genome to the nucleus at the late step during the viral replication cycle.

The protein localises to the virion. Its subcellular location is the host cytoplasm. In terms of biological role, self assembles to form an icosahedral capsid. Most capsids appear to be large particles with an icosahedral symmetry of T=4 and consist of 240 copies of capsid protein, though a fraction forms smaller T=3 particles consisting of 180 capsid proteins. Entering capsids are transported along microtubules to the nucleus. Phosphorylation of the capsid is thought to induce exposure of nuclear localization signal in the C-terminal portion of the capsid protein that allows binding to the nuclear pore complex via the importin (karyopherin-) alpha and beta. Capsids are imported in intact form through the nuclear pore into the nuclear basket, where it probably binds NUP153. Only capsids that contain the mature viral genome can release the viral DNA and capsid protein into the nucleoplasm. Immature capsids get stuck in the basket. Capsids encapsulate the pre-genomic RNA and the P protein. Pre-genomic RNA is reverse-transcribed into DNA while the capsid is still in the cytoplasm. The capsid can then either be directed to the nucleus, providing more genomes for transcription, or bud through the endoplasmic reticulum to provide new virions. This Hepatitis B virus genotype B1 (isolate Japan/Ry30/2002) (HBV-B) protein is Capsid protein.